A 394-amino-acid polypeptide reads, in one-letter code: Probable peptidoglycan glycosyltransferase FtsW (394 aa).

Residues 1 to 27 are Cytoplasmic-facing; it reads MEFLQNIKKNYDEWTRITPQGLLYDRA. Residues 28–48 form a helical membrane-spanning segment; the sequence is LFWLFVILLLIGLVAVTSASI. The Periplasmic portion of the chain corresponds to 49–66; it reads PYSSRLFNDPFYFAKRDA. Residues 67–87 form a helical membrane-spanning segment; sequence IYVLLSLLTCYISLQISSSQW. Over 88-93 the chain is Cytoplasmic; it reads EKWHAK. Residues 94–114 traverse the membrane as a helical segment; it reads IFLFSVILLLLVPFIGTSVNG. The Periplasmic portion of the chain corresponds to 115-120; sequence AKRWIS. A helical transmembrane segment spans residues 121–141; it reads LGILNFQPAEFAKLALTCFLA. Over 142-155 the chain is Cytoplasmic; the sequence is SYFTRRYDEVRSRH. 2 helical membrane-spanning segments follow: residues 156-176 and 177-197; these read VSIFKPFIVMLVLGCFLLLQP and DLGSTVVLFIIMSGMLFIVGA. A topological domain (cytoplasmic) is located at residue Lys198. A helical transmembrane segment spans residues 199-219; that stretch reads ILQFVGLIALGGILFVWLVLT. The Periplasmic portion of the chain corresponds to 220–277; it reads ASYRLKRFIGFLEPFKEPYGTGFQLTNSLIAFGRGEITGEGLGNSIQKLDYLPEAHTD. The helical transmembrane segment at 278–298 threads the bilayer; it reads FIMAIIGEEFGFIGILIVILL. The Cytoplasmic segment spans residues 299–322; sequence LGLLIFRAMKIGRESLMLEQRFRG. Residues 323–343 form a helical membrane-spanning segment; the sequence is FFALGIGFWIFFQGFVNLGMA. At 344–353 the chain is on the periplasmic side; it reads LGMLPTKGLT. A helical transmembrane segment spans residues 354-374; that stretch reads FPLVSYGGSSIIIMSATIGIL. Residues 375–394 are Cytoplasmic-facing; sequence LRIDHENRLFRIGQARLRDD.

This sequence belongs to the SEDS family. FtsW subfamily.

It is found in the cell inner membrane. The enzyme catalyses [GlcNAc-(1-&gt;4)-Mur2Ac(oyl-L-Ala-gamma-D-Glu-L-Lys-D-Ala-D-Ala)](n)-di-trans,octa-cis-undecaprenyl diphosphate + beta-D-GlcNAc-(1-&gt;4)-Mur2Ac(oyl-L-Ala-gamma-D-Glu-L-Lys-D-Ala-D-Ala)-di-trans,octa-cis-undecaprenyl diphosphate = [GlcNAc-(1-&gt;4)-Mur2Ac(oyl-L-Ala-gamma-D-Glu-L-Lys-D-Ala-D-Ala)](n+1)-di-trans,octa-cis-undecaprenyl diphosphate + di-trans,octa-cis-undecaprenyl diphosphate + H(+). It participates in cell wall biogenesis; peptidoglycan biosynthesis. Functionally, peptidoglycan polymerase that is essential for cell division. This chain is Probable peptidoglycan glycosyltransferase FtsW, found in Haemophilus influenzae (strain ATCC 51907 / DSM 11121 / KW20 / Rd).